The following is a 66-amino-acid chain: Large ribosomal subunit protein bL33c (66 aa).

Belongs to the bacterial ribosomal protein bL33 family.

It localises to the plastid. The protein localises to the chloroplast. In Dioscorea elephantipes (Elephant's foot yam), this protein is Large ribosomal subunit protein bL33c.